A 108-amino-acid polypeptide reads, in one-letter code: Putative lipid-binding protein AIR1B (108 aa).

The signal sequence occupies residues 1–23; the sequence is MAPRTSLALFVSLNLLFFTCTSA. 3 cysteine pairs are disulfide-bonded: Cys28–Cys55, Cys35–Cys54, and Cys71–Cys107.

Belongs to the plant LTP family. PEARLI1 subfamily.

It is found in the secreted. The protein is Putative lipid-binding protein AIR1B (AIR1B) of Arabidopsis thaliana (Mouse-ear cress).